The primary structure comprises 568 residues: MTALNSYAFAMSEYAEGDSSLLQLQEVDSSRMGGHVLSPTFNSSSPSLPVESHPICIPSPYTDLGHDFTTLPFYSPSLLGYGTSPLSDCPSVRQSLSPTLFWPPHSHVSSLALHQQQTRLQPNHPTGGTWAELTPHDHGEEENCKPLSKRVAVAEETSTSLRGKADMHYCAVCSDYASGYHYGVWSCEGCKAFFKRSIQGHNDYICPATNQCTIDKNRRKSCQACRLRKCYEVGMMKCGLRRDRSSYQQRGAQQNRLTRFSGRMRTSGPRSQEIKTVQRPLSGNKVVTMALSPEELIARIMDAEPPEIYLMKDVKKPFTEANVMMSLTNLADKELVHMISWAKKIPGFVEIGLFDQVHLLECCWLEVLMLGLMWRSVNHPGKLVFSPDLSLSRDEGSCVQGFAEIFDMLLAATSRFRELKLQREEYACLKAMILLNSNMCLSSAEGGEELQSRSKLLCLLDSVTDALVWAISKTGLSFQQRSTRLAHLLMLLSHIRHVSNKGMDHLHSMKMKKMVPLYDLLLEMLDAHIMHGSRLSHSGPQADPVPKESNCVQETFTCTSQHGGTLRP.

Residues 12–169 form a modulating region; that stretch reads SEYAEGDSSL…SLRGKADMHY (158 aa). 2 NR C4-type zinc fingers span residues 170–190 and 206–230; these read CAVCSDYASGYHYGVWSCEGC and CPATNQCTIDKNRRKSCQACRLRKC. The nuclear receptor DNA-binding region spans 170 to 235; it reads CAVCSDYASG…RLRKCYEVGM (66 aa). The NR LBD domain maps to 292-528; sequence SPEELIARIM…DLLLEMLDAH (237 aa).

It belongs to the nuclear hormone receptor family. NR3 subfamily. As to quaternary structure, binds DNA as a homodimer. Can form a heterodimer with ER-alpha.

It is found in the nucleus. Its function is as follows. Binds estrogens with an affinity similar to that of ER-alpha, and activates expression of reporter genes containing estrogen response elements (ERE) in an estrogen-dependent manner. The protein is Estrogen receptor beta-1 (esr2a) of Carassius auratus (Goldfish).